We begin with the raw amino-acid sequence, 170 residues long: Peptide deformylase-like (170 aa).

E139 is an active-site residue.

This sequence belongs to the polypeptide deformylase family.

In Bradyrhizobium diazoefficiens (strain JCM 10833 / BCRC 13528 / IAM 13628 / NBRC 14792 / USDA 110), this protein is Peptide deformylase-like.